Reading from the N-terminus, the 444-residue chain is Methylenetetrahydrofolate--tRNA-(uracil-5-)-methyltransferase TrmFO (444 aa).

10 to 15 (GAGLAG) lines the FAD pocket.

The protein belongs to the MnmG family. TrmFO subfamily. The cofactor is FAD.

Its subcellular location is the cytoplasm. It catalyses the reaction uridine(54) in tRNA + (6R)-5,10-methylene-5,6,7,8-tetrahydrofolate + NADH + H(+) = 5-methyluridine(54) in tRNA + (6S)-5,6,7,8-tetrahydrofolate + NAD(+). It carries out the reaction uridine(54) in tRNA + (6R)-5,10-methylene-5,6,7,8-tetrahydrofolate + NADPH + H(+) = 5-methyluridine(54) in tRNA + (6S)-5,6,7,8-tetrahydrofolate + NADP(+). Functionally, catalyzes the folate-dependent formation of 5-methyl-uridine at position 54 (M-5-U54) in all tRNAs. In Streptococcus suis (strain 98HAH33), this protein is Methylenetetrahydrofolate--tRNA-(uracil-5-)-methyltransferase TrmFO.